A 268-amino-acid polypeptide reads, in one-letter code: F-actin-capping protein subunit beta (268 aa).

It belongs to the F-actin-capping protein beta subunit family. In terms of assembly, component of the F-actin capping complex, composed of a heterodimer of an alpha and a beta subunit.

It localises to the cytoplasm. The protein resides in the cytoskeleton. Its subcellular location is the actin patch. It is found in the nucleus. F-actin-capping proteins bind in a Ca(2+)-independent manner to the fast growing ends of actin filaments (barbed end) thereby blocking the exchange of subunits at these ends. Unlike other capping proteins (such as gelsolin and severin), these proteins do not sever actin filaments. Competes with formin cdc12 for attachment to the actin filaments barbed ends. Slowly replaces cdc12 on the barbed ends in preparation for filament disassembly during contractile ring constriction. This is F-actin-capping protein subunit beta (acp2) from Schizosaccharomyces pombe (strain 972 / ATCC 24843) (Fission yeast).